The chain runs to 315 residues: Eukaryotic translation initiation factor 2 subunit 1 (315 aa).

In terms of domain architecture, S1 motif spans 17 to 88 (DDVVMVNVRS…DKGYIDLSKR (72 aa)). Residues Ser-49 and Ser-52 each carry the phosphoserine modification. The disordered stretch occupies residues 292-315 (RLEKENAEVDGDDDAEEMEAKTED). Acidic residues predominate over residues 299–308 (EVDGDDDAEE).

The protein belongs to the eIF-2-alpha family. Eukaryotic translation initiation factor 2 eIF2 is a heterotrimeric complex composed of an alpha, a beta and a gamma subunit. Phosphorylation at Ser-49 and Ser-52 stabilizes the eIF-2/GDP/eIF2B complex and prevents GDP/GTP exchange reaction, thus impairing the recycling of eIF-2 between successive rounds of initiation and leading to global inhibition of translation, while concomitantly initiating the preferential translation of integrated stress response (ISR)-specific mRNAs.

It is found in the cytoplasm. Its subcellular location is the stress granule. The protein localises to the cytosol. Activity is regulated by phosphorylation at Ser-49 and Ser-52, which stabilizes the eIF-2/GDP/eIF2B complex and prevents the eIF2B-mediated exchange of GDP for GTP, thereby preventing the formation of the 43S pre-initiation complex (PIC). This results in the global attenuation of 5' cap-dependent protein synthesis and concomitant translation of ISR-specific mRNAs that contain a short upstream open reading frame (uORF) in their 5' UTR. In terms of biological role, functions in the early steps of protein synthesis by forming a ternary complex with GTP and initiator tRNA. This complex binds to a 40S ribosomal subunit, followed by mRNA binding to form a 43S pre-initiation complex. Junction of the 60S ribosomal subunit to form the 80S initiation complex is preceded by hydrolysis of the GTP bound to eIF-2 and release of an eIF-2-GDP binary complex. In order for eIF-2 to recycle and catalyze another round of initiation, the GDP bound to eIF-2 must exchange with GTP by way of a reaction catalyzed by eIF2B. EIF2S1/eIF2-alpha is a key component of the integrated stress response (ISR), required for adaptation to various stress: phosphorylation by metabolic-stress sensing protein kinases in response to stress converts EIF2S1/eIF-2-alpha in a global protein synthesis inhibitor, leading to a attenuation of cap-dependent translation, while concomitantly initiating the preferential translation of ISR-specific mRNAs, such as the transcriptional activators ATF4 and QRICH1. The protein is Eukaryotic translation initiation factor 2 subunit 1 (eif2s1) of Xenopus tropicalis (Western clawed frog).